The chain runs to 303 residues: Cytoplasmic envelopment protein 1 (303 aa).

This sequence belongs to the herpesviridae cytoplasmic envelopment protein 1 family.

The protein localises to the virion. It localises to the virion tegument. Its subcellular location is the host cytoplasm. The protein resides in the host Golgi apparatus. Its function is as follows. Plays a critical role in cytoplasmic virus egress. Participates in the final step of tegumentation and envelope acquisition within the host cytoplasm. This Equine herpesvirus 1 (strain Ab4p) (EHV-1) protein is Cytoplasmic envelopment protein 1.